The sequence spans 263 residues: L-erythrulose-1-phosphate isomerase (263 aa).

Residue His106 is the Electrophile of the active site. Glu178 (proton acceptor) is an active-site residue.

Belongs to the triosephosphate isomerase family.

It catalyses the reaction L-erythrulose 1-phosphate = D-erythrulose 4-phosphate. It participates in carbohydrate metabolism; L-threitol degradation. Catalyzes the isomerization of L-erythrulose-1P to D-erythrulose-4P. Involved in the degradation pathway of L-threitol, that allows M.smegmatis to grow on this compound as the sole carbon source. The protein is L-erythrulose-1-phosphate isomerase of Mycolicibacterium smegmatis (strain ATCC 700084 / mc(2)155) (Mycobacterium smegmatis).